The chain runs to 77 residues: Pollen allergen Amb p 5b (77 aa).

The N-terminal stretch at 1–22 is a signal peptide; that stretch reads MNNEKNVSFEFIGSTNEVDEIK. 3 disulfide bridges follow: Cys-26-Cys-61, Cys-33-Cys-48, and Cys-40-Cys-54.

It localises to the secreted. The polypeptide is Pollen allergen Amb p 5b (Ambrosia psilostachya (Western ragweed)).